The primary structure comprises 586 residues: MFREAIYHRPKDNYAYACANGELHIRIRTKKDDMKEVTLVYGDTYEFDDNKWTYSTAHMKKTGSDQLFDYWLASVTPRYKRLRYGFIVNDRKDSTCFTEKGFYPEPPVNDISYYFSFPYVNQADIFQAPEWVKDTVWYQIFPERFANGNKDNDPDGTLPWGSREPEIDNFFGGDLEGVIEHIDYLKELGIGGIYFTPIFKAHSNHKYDTIDYMEIDPQFGTKETLKKLIDVCHKNGIKVMLDAVFNHSGVFFPPFQDVVEKGKNSKYQDWFHIREFPLVMEPRPNYDTFGFTSSMPKFKTENPEVKEYLLEVGRYWVREFDIDGWRLDVANEVSHAFWREFRREVKAIKPDLYILGEIWHDSLPWLRGDQFDAVMNYPLSTNIVNLFANQSVSVKEFVENMSHVIHMYPDTVNEAAFNLVGSHDTPRILTQCGEDVERLKQVFVLLLTFIGTPCIYYGDEIGLTGGQDPGCRKCMEWNPDQQNRELLQHVRKLIQLRSENPLLANEGELTFVPPKNEEDPCLAYTKSNEEKTIMIIINKSKNSVEYPLSFDAAEQTVKNLWNQEQLILQNGQTLELKANDFKILEF.

Ca(2+) contacts are provided by asparagine 147, asparagine 152, aspartate 153, glycine 172, and aspartate 174. The substrate site is built by histidine 247 and arginine 326. Residue aspartate 328 is the Nucleophile of the active site. Glutamate 357 acts as the Proton donor in catalysis. Substrate is bound by residues 423-424 (HD), aspartate 468, and arginine 472.

This sequence belongs to the glycosyl hydrolase 13 family. Ca(2+) is required as a cofactor.

It catalyses the reaction hydrolysis of (1-&gt;4)-alpha-D-glucosidic linkages in polysaccharides so as to remove successive alpha-maltose residues from the non-reducing ends of the chains.. In terms of biological role, converts starch into maltose. This chain is Maltogenic alpha-amylase, found in Bacillus acidopullulyticus.